We begin with the raw amino-acid sequence, 146 residues long: D-aminoacyl-tRNA deacylase (146 aa).

The Gly-cisPro motif, important for rejection of L-amino acids motif lies at 137–138 (GP).

It belongs to the DTD family. As to quaternary structure, homodimer.

The protein localises to the cytoplasm. The catalysed reaction is glycyl-tRNA(Ala) + H2O = tRNA(Ala) + glycine + H(+). The enzyme catalyses a D-aminoacyl-tRNA + H2O = a tRNA + a D-alpha-amino acid + H(+). Functionally, an aminoacyl-tRNA editing enzyme that deacylates mischarged D-aminoacyl-tRNAs. Also deacylates mischarged glycyl-tRNA(Ala), protecting cells against glycine mischarging by AlaRS. Acts via tRNA-based rather than protein-based catalysis; rejects L-amino acids rather than detecting D-amino acids in the active site. By recycling D-aminoacyl-tRNA to D-amino acids and free tRNA molecules, this enzyme counteracts the toxicity associated with the formation of D-aminoacyl-tRNA entities in vivo and helps enforce protein L-homochirality. The polypeptide is D-aminoacyl-tRNA deacylase (Psychrobacter sp. (strain PRwf-1)).